A 109-amino-acid chain; its full sequence is Cell division protein ZapA (109 aa).

Positions 21 to 97 (PEQQEALNQA…QTIEQALVEQ (77 aa)) form a coiled coil.

It belongs to the ZapA family. Type 1 subfamily. Homodimer. Interacts with FtsZ.

It localises to the cytoplasm. Its function is as follows. Activator of cell division through the inhibition of FtsZ GTPase activity, therefore promoting FtsZ assembly into bundles of protofilaments necessary for the formation of the division Z ring. It is recruited early at mid-cell but it is not essential for cell division. This chain is Cell division protein ZapA, found in Sodalis glossinidius (strain morsitans).